Here is a 303-residue protein sequence, read N- to C-terminus: Peroxisomal trans-2-enoyl-CoA reductase (303 aa).

23 to 47 (VTGGATGIGKAIVKELLELGSNVVI) serves as a coordination point for NADP(+). Lys-32 bears the N6-succinyllysine mark. Position 49 is a phosphoserine (Ser-49). The active-site Proton acceptor is Tyr-179. Phosphotyrosine is present on Tyr-179. The Microbody targeting signal motif lies at 301–303 (AKL).

It belongs to the short-chain dehydrogenases/reductases (SDR) family. As to quaternary structure, interacts with PEX5, probably required to target it into peroxisomes.

The protein localises to the peroxisome. The enzyme catalyses a (2E)-enoyl-CoA + NADPH + H(+) = a 2,3-saturated acyl-CoA + NADP(+). The catalysed reaction is (2E)-hexenoyl-CoA + NADPH + H(+) = hexanoyl-CoA + NADP(+). It catalyses the reaction (2E)-octenoyl-CoA + NADPH + H(+) = octanoyl-CoA + NADP(+). It carries out the reaction (2E)-decenoyl-CoA + NADPH + H(+) = decanoyl-CoA + NADP(+). The enzyme catalyses (2E)-dodecenoyl-CoA + NADPH + H(+) = dodecanoyl-CoA + NADP(+). The catalysed reaction is (2E)-tetradecenoyl-CoA + NADPH + H(+) = tetradecanoyl-CoA + NADP(+). It functions in the pathway lipid metabolism; fatty acid biosynthesis. In terms of biological role, participates in chain elongation of fatty acids. Catalyzes the reduction of trans-2-enoyl-CoAs of varying chain lengths from 6:1 to 16:1, having maximum activity with 10:1 CoA. Has no 2,4-dienoyl-CoA reductase activity. In Pongo abelii (Sumatran orangutan), this protein is Peroxisomal trans-2-enoyl-CoA reductase (PECR).